A 193-amino-acid polypeptide reads, in one-letter code: dTTP/UTP pyrophosphatase (193 aa).

Residue aspartate 77 is the Proton acceptor of the active site.

It belongs to the Maf family. YhdE subfamily. A divalent metal cation is required as a cofactor.

It is found in the cytoplasm. It catalyses the reaction dTTP + H2O = dTMP + diphosphate + H(+). It carries out the reaction UTP + H2O = UMP + diphosphate + H(+). Nucleoside triphosphate pyrophosphatase that hydrolyzes dTTP and UTP. May have a dual role in cell division arrest and in preventing the incorporation of modified nucleotides into cellular nucleic acids. This is dTTP/UTP pyrophosphatase from Parabacteroides distasonis (strain ATCC 8503 / DSM 20701 / CIP 104284 / JCM 5825 / NCTC 11152).